The primary structure comprises 1301 residues: DNA-directed RNA polymerase subunit beta (1301 aa).

Belongs to the RNA polymerase beta chain family. The RNAP catalytic core consists of 2 alpha, 1 beta, 1 beta' and 1 omega subunit. When a sigma factor is associated with the core the holoenzyme is formed, which can initiate transcription.

It carries out the reaction RNA(n) + a ribonucleoside 5'-triphosphate = RNA(n+1) + diphosphate. DNA-dependent RNA polymerase catalyzes the transcription of DNA into RNA using the four ribonucleoside triphosphates as substrates. This Chlorobium luteolum (strain DSM 273 / BCRC 81028 / 2530) (Pelodictyon luteolum) protein is DNA-directed RNA polymerase subunit beta.